The sequence spans 103 residues: MNLTPREREKLLVSLAAMVARNRLSRGVRLNHPEAIALITDFVVEGARDGRSVADLMQAGAHVITAGQCMSGVPEMIEAVQVEATFPDGTKLVTVHHPIRHEA.

Belongs to the urease gamma subunit family. Heterotrimer of UreA (gamma), UreB (beta) and UreC (alpha) subunits. Three heterotrimers associate to form the active enzyme.

The protein resides in the cytoplasm. It carries out the reaction urea + 2 H2O + H(+) = hydrogencarbonate + 2 NH4(+). It functions in the pathway nitrogen metabolism; urea degradation; CO(2) and NH(3) from urea (urease route): step 1/1. The polypeptide is Urease subunit gamma (Paracoccus denitrificans (strain Pd 1222)).